A 559-amino-acid chain; its full sequence is Hepatocyte nuclear factor 1-beta-A (559 aa).

Residues 1-35 form a dimerization region; the sequence is MFANMVSKLTSLQQELLSALLDSGVTKDVLLQALE. The 32-residue stretch at 5–36 folds into the HNF-p1 domain; the sequence is MVSKLTSLQQELLSALLDSGVTKDVLLQALED. Residues 53–98 are disordered; it reads MSPSGSKLSDTDSKPVFHTLTNGHSKGKLSGDEGSEDGDDYDTPPI. A compositionally biased stretch (acidic residues) spans 85–94; sequence EGSEDGDDYD. The region spanning 100–195 is the POU-specific atypical domain; it reads KELQSQNTEE…ILRQFNQATQ (96 aa). Positions 240–320 form a DNA-binding region, homeobox; HNF1-type; the sequence is LRRNRFKWGP…NRRKEEAFRQ (81 aa). 2 stretches are compositionally biased toward low complexity: residues 334 to 354 and 370 to 381; these read LNSLLSHSSPHHPQTSSSPPS and TSSTTINHHSSN. Positions 334-384 are disordered; the sequence is LNSLLSHSSPHHPQTSSSPPSKMQGVRYSQQGPGEVTSSTTINHHSSNAMS.

Belongs to the HNF1 homeobox family. Binds DNA as a dimer. Can form homodimer or heterodimer with HNF1-alpha. As to expression, during embryonic development, expressed dynamically in the developing hindbrain, kidney (pronephros), gut, liver and pancreas; expressed in both intermediate mesoderm (precursor to the kidney) and the caudal hindbrain (including rhombomeres r5 and r6) at 10 hpf with expression diminishing caudally by 14 hpf. Strongly expressed in adult kidney, gut, liver and swim bladder; weakly expressed in brain, eye, testis, ovary and heart.

It is found in the nucleus. Transcription factor that binds to the inverted palindrome 5'-GTTAATNATTAAC-3'. Required for induction of rhombomere r5/r6 gene expression in the hindbrain. This chain is Hepatocyte nuclear factor 1-beta-A (hnf1ba), found in Danio rerio (Zebrafish).